The sequence spans 181 residues: Oligoribonuclease (181 aa).

Positions 8 to 171 constitute an Exonuclease domain; sequence LIWVDLEMTG…EDIKESIAEM (164 aa). Residue Y129 is part of the active site.

The protein belongs to the oligoribonuclease family.

Its subcellular location is the cytoplasm. 3'-to-5' exoribonuclease specific for small oligoribonucleotides. This is Oligoribonuclease from Shewanella frigidimarina (strain NCIMB 400).